Consider the following 72-residue polypeptide: Translation initiation factor IF-1 (72 aa).

Positions 1–72 constitute an S1-like domain; the sequence is MAKEDNIEMQ…TKGRIVFRAR (72 aa).

Belongs to the IF-1 family. In terms of assembly, component of the 30S ribosomal translation pre-initiation complex which assembles on the 30S ribosome in the order IF-2 and IF-3, IF-1 and N-formylmethionyl-tRNA(fMet); mRNA recruitment can occur at any time during PIC assembly.

It is found in the cytoplasm. Functionally, one of the essential components for the initiation of protein synthesis. Stabilizes the binding of IF-2 and IF-3 on the 30S subunit to which N-formylmethionyl-tRNA(fMet) subsequently binds. Helps modulate mRNA selection, yielding the 30S pre-initiation complex (PIC). Upon addition of the 50S ribosomal subunit IF-1, IF-2 and IF-3 are released leaving the mature 70S translation initiation complex. In Shewanella baltica (strain OS155 / ATCC BAA-1091), this protein is Translation initiation factor IF-1.